A 223-amino-acid chain; its full sequence is N-terminal Xaa-Pro-Lys N-methyltransferase 1 (223 aa).

M1 bears the N-acetylmethionine mark. The residue at position 2 (T2) is an N-acetylthreonine; in N-terminal Xaa-Pro-Lys N-methyltransferase 1, N-terminally processed. S-adenosyl-L-methionine is bound by residues G69, R74, 91 to 93 (DVT), 119 to 120 (LQ), and Q135.

The protein belongs to the methyltransferase superfamily. NTM1 family.

It localises to the nucleus. It carries out the reaction N-terminal L-alanyl-L-prolyl-L-lysyl-[protein] + 3 S-adenosyl-L-methionine = N-terminal N,N,N-trimethyl-L-alanyl-L-prolyl-L-lysyl-[protein] + 3 S-adenosyl-L-homocysteine + 3 H(+). The catalysed reaction is N-terminal L-seryl-L-prolyl-L-lysyl-[protein] + 3 S-adenosyl-L-methionine = N-terminal N,N,N-trimethyl-L-seryl-L-prolyl-L-lysyl-[protein] + 3 S-adenosyl-L-homocysteine + 3 H(+). The enzyme catalyses N-terminal L-prolyl-L-prolyl-L-lysyl-[protein] + 2 S-adenosyl-L-methionine = N-terminal N,N-dimethyl-L-prolyl-L-prolyl-L-lysyl-[protein] + 2 S-adenosyl-L-homocysteine + 2 H(+). Functionally, distributive alpha-N-methyltransferase that methylates the N-terminus of target proteins containing the N-terminal motif [Ala/Gly/Pro/Ser]-Pro-Lys when the initiator Met is cleaved. Specifically catalyzes mono-, di- or tri-methylation of the exposed alpha-amino group of the Ala, Gly or Ser residue in the [Ala/Gly/Ser]-Pro-Lys motif and mono- or di-methylation of Pro in the Pro-Pro-Lys motif. Some of the substrates may be primed by NTMT2-mediated monomethylation. Catalyzes the trimethylation of the N-terminal Gly in CENPA (after removal of Met-1). Responsible for the N-terminal methylation of KLHL31, MYL2, MYL3, RB1, RCC1, RPL23A and SET. Required during mitosis for normal bipolar spindle formation and chromosome segregation via its action on RCC1. This Rattus norvegicus (Rat) protein is N-terminal Xaa-Pro-Lys N-methyltransferase 1 (Ntmt1).